Here is a 193-residue protein sequence, read N- to C-terminus: Flagellin B3 (193 aa).

Residues 1–12 constitute a propeptide that is removed on maturation; the sequence is MFEFITDEDERG.

This sequence belongs to the archaeal flagellin family. Post-translationally, glycosylated.

The protein resides in the archaeal flagellum. Its function is as follows. Flagellin is the subunit protein which polymerizes to form the filaments of archaeal flagella. The polypeptide is Flagellin B3 (flaB3) (Halobacterium salinarum (strain ATCC 700922 / JCM 11081 / NRC-1) (Halobacterium halobium)).